Reading from the N-terminus, the 144-residue chain is Large ribosomal subunit protein uL11 (144 aa).

This sequence belongs to the universal ribosomal protein uL11 family. As to quaternary structure, part of the ribosomal stalk of the 50S ribosomal subunit. Interacts with L10 and the large rRNA to form the base of the stalk. L10 forms an elongated spine to which L12 dimers bind in a sequential fashion forming a multimeric L10(L12)X complex. Post-translationally, one or more lysine residues are methylated.

Its function is as follows. Forms part of the ribosomal stalk which helps the ribosome interact with GTP-bound translation factors. The polypeptide is Large ribosomal subunit protein uL11 (Marinomonas sp. (strain MWYL1)).